Here is a 293-residue protein sequence, read N- to C-terminus: Probable aspartoacylase (293 aa).

Residues histidine 14 and glutamate 17 each coordinate Zn(2+). Residues arginine 56 and 63-64 contribute to the substrate site; that span reads NR. Histidine 106 provides a ligand contact to Zn(2+). Substrate is bound by residues glutamate 165 and tyrosine 276.

It belongs to the AspA/AstE family. Aspartoacylase subfamily. The cofactor is Zn(2+).

The enzyme catalyses an N-acyl-L-aspartate + H2O = a carboxylate + L-aspartate. This Trichodesmium erythraeum (strain IMS101) protein is Probable aspartoacylase.